Reading from the N-terminus, the 347-residue chain is Histone deacetylase 11 (347 aa).

The tract at residues 14 to 318 is histone deacetylase; that stretch reads KRWPIVYSPR…ARIIADSILN (305 aa). H143 is a catalytic residue.

It belongs to the histone deacetylase family. As to quaternary structure, interacts with HDAC6.

It is found in the nucleus. The enzyme catalyses N(6)-acetyl-L-lysyl-[histone] + H2O = L-lysyl-[histone] + acetate. Its function is as follows. Responsible for the deacetylation of lysine residues on the N-terminal part of the core histones (H2A, H2B, H3 and H4). Histone deacetylation gives a tag for epigenetic repression and plays an important role in transcriptional regulation, cell cycle progression and developmental events. Histone deacetylases act via the formation of large multiprotein complexes. The polypeptide is Histone deacetylase 11 (Hdac11) (Mus musculus (Mouse)).